A 342-amino-acid chain; its full sequence is Dihydroorotate dehydrogenase (quinone) (342 aa).

Residues 65–69 and Thr-89 contribute to the FMN site; that span reads AGLDK. A substrate-binding site is contributed by Lys-69. 114–118 is a binding site for substrate; it reads NRMGF. 2 residues coordinate FMN: Asn-142 and Asn-175. Asn-175 contacts substrate. Ser-178 serves as the catalytic Nucleophile. Residue Asn-180 participates in substrate binding. 2 residues coordinate FMN: Lys-220 and Thr-248. A substrate-binding site is contributed by 249–250; that stretch reads NT. FMN-binding positions include Gly-271, Gly-300, and 321-322; that span reads YT.

This sequence belongs to the dihydroorotate dehydrogenase family. Type 2 subfamily. In terms of assembly, monomer. FMN serves as cofactor.

The protein resides in the cell membrane. The catalysed reaction is (S)-dihydroorotate + a quinone = orotate + a quinol. Its pathway is pyrimidine metabolism; UMP biosynthesis via de novo pathway; orotate from (S)-dihydroorotate (quinone route): step 1/1. Its function is as follows. Catalyzes the conversion of dihydroorotate to orotate with quinone as electron acceptor. This Burkholderia pseudomallei (strain K96243) protein is Dihydroorotate dehydrogenase (quinone).